The primary structure comprises 391 residues: Acridone synthase 2 (391 aa).

The active site involves cysteine 164.

Belongs to the thiolase-like superfamily. Chalcone/stilbene synthases family. Homodimer.

It carries out the reaction N-methylanthraniloyl-CoA + 3 malonyl-CoA + 3 H(+) = 1,3-dihydroxy-N-methylacridone + 3 CO2 + 4 CoA + H2O. This chain is Acridone synthase 2 (ACS2), found in Ruta graveolens (Common rue).